Consider the following 465-residue polypeptide: E3 ubiquitin-protein ligase parkin (465 aa).

One can recognise a Ubiquitin-like domain in the interval 1–76 (MIVFVRFNSS…VHIVQRPQRK (76 aa)). Serine 65 is modified (phosphoserine; by PINK1). The tract at residues 71-96 (QRPQRKSHETNASGGDKPQSTPEGSI) is disordered. The tract at residues 77-237 (SHETNASGGD…LITNNSRSIP (161 aa)) is necessary for PINK1-dependent localization to mitochondria. Threonine 80 is subject to Phosphothreonine. Positions 80 to 93 (TNASGGDKPQSTPE) are enriched in polar residues. The RING-type 0; atypical zinc-finger motif lies at 141–225 (PTYHSFFVYC…PTSDKDTSVA (85 aa)). Phosphothreonine; by PINK1 is present on threonine 175. Positions 204–238 (TRAEFFFKCGAHPTSDKDTSVALNLITNNSRSIPC) are SYT11 binding 1. Threonine 217 is subject to Phosphothreonine. The tract at residues 234-465 (RSIPCIACTD…ACMGDHWFDV (232 aa)) is TRIAD supradomain. Cysteine 238, cysteine 241, cysteine 253, histidine 257, cysteine 260, cysteine 263, cysteine 289, cysteine 293, cysteine 332, and cysteine 337 together coordinate Zn(2+). The RING-type 1 zinc finger occupies 238–293 (CIACTDVRNPVLVFQCNHRHVICLDCFHLYCVTRLNDRQFVHDAQLGYSLPCVAGC). The tract at residues 257–293 (HVICLDCFHLYCVTRLNDRQFVHDAQLGYSLPCVAGC) is SYT11 binding 2. The segment at 313–377 (NRYQQYGAEE…CKEAYHEGEC (65 aa)) adopts an IBR-type zinc-finger fold. A Glycyl lysine isopeptide (Lys-Gly) (interchain with G-Cter in ISG15) cross-link involves residue lysine 349. Zn(2+)-binding residues include cysteine 352, cysteine 360, cysteine 365, and cysteine 368. A Glycyl lysine isopeptide (Lys-Gly) (interchain with G-Cter in ISG15) cross-link involves residue lysine 369. Residues histidine 373 and cysteine 377 each contribute to the Zn(2+) site. The segment at 378 to 410 (DSMFEASGATSQAYRVDQRAAEQARWEEASKET) is REP. The Zn(2+) site is built by cysteine 418 and cysteine 421. The RING-type 2; atypical zinc-finger motif lies at 418 to 449 (CPRCNVPIEKNGGCMHMKCPQPQCKLEWCWNC). Cysteine 431 is a catalytic residue. The Zn(2+) site is built by cysteine 436, cysteine 441, cysteine 446, cysteine 449, cysteine 457, and histidine 461.

The protein belongs to the RBR family. Parkin subfamily. Forms an E3 ubiquitin ligase complex with UBE2L3 or UBE2L6. Mediates 'Lys-63'-linked polyubiquitination by associating with UBE2V1. Part of a SCF-like complex, consisting of PRKN, CUL1 and FBXW7. Interacts with SNCAIP. Binds to the C2A and C2B domains of SYT11. Interacts and regulates the turnover of SEPTIN5. Part of a complex, including STUB1, HSP70 and GPR37. The amount of STUB1 in the complex increases during ER stress. STUB1 promotes the dissociation of HSP70 from PRKN and GPR37, thus facilitating PRKN-mediated GPR37 ubiquitination. HSP70 transiently associates with unfolded GPR37 and inhibits the E3 activity of PRKN, whereas, STUB1 enhances the E3 activity of PRKN through promotion of dissociation of HSP70 from PRKN-GPR37 complexes. Interacts with PSMD4 and PACRG. Interacts with LRRK2. Interacts with RANBP2. Interacts with SUMO1 but not SUMO2, which promotes nuclear localization and autoubiquitination. Interacts (via first RING-type domain) with AIMP2 (via N-terminus). Interacts with PSMA7 and RNF41. Interacts with PINK1. Forms a complex with PINK1 and PARK7. Interacts with CHPF, the interaction with isoform 2 may facilitate PRKN transport into the mitochondria. Interacts with MFN2 (phosphorylated), promotes PRKN localization in dysfunctional depolarized mitochondria. Interacts with FBXO7; this promotes translocation to dysfunctional depolarized mitochondria. Interacts with ZNF746. Interacts with heat shock protein 70 family members, including HSPA1L, HSPA1A and HSPA8; interaction HSPA1L promotes translocation to damaged mitochondria. Interacts with BAG4 and, to a lesser extent, BAG5; interaction with BAG4 inhibits translocation to damaged mitochondria. Forms a complex with PRKN and PARK7. Interacts with AMBRA1. Auto-ubiquitinates in an E2-dependent manner leading to its own degradation. Also polyubiquitinated by RNF41 for proteasomal degradation. Post-translationally, S-nitrosylated. In terms of processing, phosphorylated. Activation requires phosphorylation at Ser-65 by PINK1 and binding to PINK1 phosphorylated ubiquitin. Phosphorylation at Thr-175 by PINK1 and at Thr-217 is important for mitochondrial localization. As to expression, largely confined to neuronal elements, including fibers and neuropil. Highly expressed at the forebrain level, in pyramidal cells of layer V, in various cortical regions and cerebellum. Expressed in the nucleus of diagonal band of Broca, nucleus basalis, bed nucleus of the stria terminalis, and olfactory tubercle. Moderate expression is seen in most neurons of the subthalamic nucleus, heart, skeletal muscle and testis. Moderate expression was found in frontal cortex, parietal cortex, cerebellum, heart, skeletal muscle and testis.

It is found in the cytoplasm. It localises to the cytosol. The protein resides in the nucleus. Its subcellular location is the endoplasmic reticulum. The protein localises to the mitochondrion. It is found in the mitochondrion outer membrane. It localises to the cell projection. The protein resides in the neuron projection. Its subcellular location is the postsynaptic density. The protein localises to the presynapse. The catalysed reaction is [E2 ubiquitin-conjugating enzyme]-S-ubiquitinyl-L-cysteine + [acceptor protein]-L-lysine = [E2 ubiquitin-conjugating enzyme]-L-cysteine + [acceptor protein]-N(6)-ubiquitinyl-L-lysine.. It participates in protein modification; protein ubiquitination. Its activity is regulated as follows. In the autoinhibited state the side chain of Phe-463 inserts into a hydrophobic groove in RING-0, occluding the ubiquitin acceptor site Cys-431, whereas the REP repressor element binds RING-1 and blocks its E2-binding site. Activation of PRKN requires 2 steps: (1) phosphorylation at Ser-65 by PINK1 and (2) binding to phosphorylated ubiquitin, leading to unlock repression of the catalytic Cys-431 by the RING-0 region via an allosteric mechanism and converting PRKN to its fully-active form. According to another report, phosphorylation at Ser-65 by PINK1 is not essential for activation and only binding to phosphorylated ubiquitin is essential to unlock repression. In addition, ISG15 conjugation positively regulates its ubiquitin E3 ligase activity by suppressing the intramolecular interaction that maintains its autoinhibited conformation. In terms of biological role, functions within a multiprotein E3 ubiquitin ligase complex, catalyzing the covalent attachment of ubiquitin moieties onto substrate proteins. Substrates include SYT11 and VDAC1. Other substrates are BCL2, CCNE1, GPR37, RHOT1/MIRO1, MFN1, MFN2, STUB1, SNCAIP, SEPTIN5, TOMM20, USP30, ZNF746, MIRO1 and AIMP2. Mediates monoubiquitination as well as 'Lys-6', 'Lys-11', 'Lys-48'-linked and 'Lys-63'-linked polyubiquitination of substrates depending on the context. Participates in the removal and/or detoxification of abnormally folded or damaged protein by mediating 'Lys-63'-linked polyubiquitination of misfolded proteins such as PARK7: 'Lys-63'-linked polyubiquitinated misfolded proteins are then recognized by HDAC6, leading to their recruitment to aggresomes, followed by degradation. Mediates 'Lys-63'-linked polyubiquitination of a 22 kDa O-linked glycosylated isoform of SNCAIP, possibly playing a role in Lewy-body formation. Mediates monoubiquitination of BCL2, thereby acting as a positive regulator of autophagy. Protects against mitochondrial dysfunction during cellular stress, by acting downstream of PINK1 to coordinate mitochondrial quality control mechanisms that remove and replace dysfunctional mitochondrial components. Depending on the severity of mitochondrial damage and/or dysfunction, activity ranges from preventing apoptosis and stimulating mitochondrial biogenesis to regulating mitochondrial dynamics and eliminating severely damaged mitochondria via mitophagy. Activation and recruitment onto the outer membrane of damaged/dysfunctional mitochondria (OMM) requires PINK1-mediated phosphorylation of both PRKN and ubiquitin. After mitochondrial damage, functions with PINK1 to mediate the decision between mitophagy or preventing apoptosis by inducing either the poly- or monoubiquitination of VDAC1, respectively; polyubiquitination of VDAC1 promotes mitophagy, while monoubiquitination of VDAC1 decreases mitochondrial calcium influx which ultimately inhibits apoptosis. When cellular stress results in irreversible mitochondrial damage, promotes the autophagic degradation of dysfunctional depolarized mitochondria (mitophagy) by promoting the ubiquitination of mitochondrial proteins such as TOMM20, RHOT1/MIRO1, MFN1 and USP30. Preferentially assembles 'Lys-6'-, 'Lys-11'- and 'Lys-63'-linked polyubiquitin chains, leading to mitophagy. The PINK1-PRKN pathway also promotes fission of damaged mitochondria by PINK1-mediated phosphorylation which promotes the PRKN-dependent degradation of mitochondrial proteins involved in fission such as MFN2. This prevents the refusion of unhealthy mitochondria with the mitochondrial network or initiates mitochondrial fragmentation facilitating their later engulfment by autophagosomes. Regulates motility of damaged mitochondria via the ubiquitination and subsequent degradation of MIRO1 and MIRO2; in motor neurons, this likely inhibits mitochondrial intracellular anterograde transport along the axons which probably increases the chance of the mitochondria undergoing mitophagy in the soma. Involved in mitochondrial biogenesis via the 'Lys-48'-linked polyubiquitination of transcriptional repressor ZNF746/PARIS which leads to its subsequent proteasomal degradation and allows activation of the transcription factor PPARGC1A. Limits the production of reactive oxygen species (ROS). Regulates cyclin-E during neuronal apoptosis. In collaboration with CHPF isoform 2, may enhance cell viability and protect cells from oxidative stress. Independently of its ubiquitin ligase activity, protects from apoptosis by the transcriptional repression of p53/TP53. May protect neurons against alpha synuclein toxicity, proteasomal dysfunction, GPR37 accumulation, and kainate-induced excitotoxicity. May play a role in controlling neurotransmitter trafficking at the presynaptic terminal and in calcium-dependent exocytosis. May represent a tumor suppressor gene. This is E3 ubiquitin-protein ligase parkin from Rattus norvegicus (Rat).